We begin with the raw amino-acid sequence, 255 residues long: NAD kinase (255 aa).

The active-site Proton acceptor is the Asp-44. NAD(+)-binding positions include 44 to 45, His-49, 114 to 115, Asp-144, Ala-152, 155 to 160, and Gln-216; these read DG, NE, and SAYNLS.

Belongs to the NAD kinase family. A divalent metal cation serves as cofactor.

It is found in the cytoplasm. It catalyses the reaction NAD(+) + ATP = ADP + NADP(+) + H(+). Functionally, involved in the regulation of the intracellular balance of NAD and NADP, and is a key enzyme in the biosynthesis of NADP. Catalyzes specifically the phosphorylation on 2'-hydroxyl of the adenosine moiety of NAD to yield NADP. The protein is NAD kinase of Rickettsia conorii (strain ATCC VR-613 / Malish 7).